A 189-amino-acid polypeptide reads, in one-letter code: Interferon alpha-B (189 aa).

Positions 1-23 are cleaved as a signal peptide; sequence MAPAWSFLLALLLLSCNAICSLG. Intrachain disulfides connect Cys24-Cys122 and Cys52-Cys162.

It belongs to the alpha/beta interferon family.

It is found in the secreted. In terms of biological role, produced by macrophages, IFN-alpha have antiviral activities. Interferon stimulates the production of two enzymes: a protein kinase and an oligoadenylate synthetase. This chain is Interferon alpha-B (IFNAB), found in Bos taurus (Bovine).